A 448-amino-acid chain; its full sequence is Glutamyl-tRNA reductase (448 aa).

Residues 49–52, Ser-109, 114–116, and Gln-120 contribute to the substrate site; these read TCNR and ETQ. Cys-50 acts as the Nucleophile in catalysis. 189–194 contributes to the NADP(+) binding site; it reads GAGEMG.

This sequence belongs to the glutamyl-tRNA reductase family. As to quaternary structure, homodimer.

It carries out the reaction (S)-4-amino-5-oxopentanoate + tRNA(Glu) + NADP(+) = L-glutamyl-tRNA(Glu) + NADPH + H(+). Its pathway is porphyrin-containing compound metabolism; protoporphyrin-IX biosynthesis; 5-aminolevulinate from L-glutamyl-tRNA(Glu): step 1/2. Catalyzes the NADPH-dependent reduction of glutamyl-tRNA(Glu) to glutamate 1-semialdehyde (GSA). This Staphylococcus epidermidis (strain ATCC 12228 / FDA PCI 1200) protein is Glutamyl-tRNA reductase.